A 202-amino-acid chain; its full sequence is Probable thymidylate kinase (202 aa).

Residue 13 to 20 coordinates ATP; it reads GIDGSGKT.

It belongs to the thymidylate kinase family.

It carries out the reaction dTMP + ATP = dTDP + ADP. This Picrophilus torridus (strain ATCC 700027 / DSM 9790 / JCM 10055 / NBRC 100828 / KAW 2/3) protein is Probable thymidylate kinase.